The primary structure comprises 324 residues: Arginase (324 aa).

Residues histidine 115, aspartate 142, histidine 144, and aspartate 146 each contribute to the Mn(2+) site. Substrate-binding positions include 144–148 (HTDLH), 155–157 (SGN), and aspartate 196. The Mn(2+) site is built by aspartate 244 and aspartate 246. Threonine 258 and glutamate 289 together coordinate substrate.

Belongs to the arginase family. Homohexamer. Mn(2+) is required as a cofactor.

The catalysed reaction is L-arginine + H2O = urea + L-ornithine. It participates in nitrogen metabolism; urea cycle; L-ornithine and urea from L-arginine: step 1/1. The sequence is that of Arginase (arcA) from Agrobacterium fabrum (strain C58 / ATCC 33970) (Agrobacterium tumefaciens (strain C58)).